We begin with the raw amino-acid sequence, 896 residues long: Bifunctional glutamine synthetase adenylyltransferase/adenylyl-removing enzyme (896 aa).

The adenylyl removase stretch occupies residues 1-411 (MSDNRLDTAR…LFNEILSEPE (411 aa)). An adenylyl transferase region spans residues 417-896 (NSEWQWAWQD…EVFGEEAATV (480 aa)).

It belongs to the GlnE family. The cofactor is Mg(2+).

The catalysed reaction is [glutamine synthetase]-O(4)-(5'-adenylyl)-L-tyrosine + phosphate = [glutamine synthetase]-L-tyrosine + ADP. The enzyme catalyses [glutamine synthetase]-L-tyrosine + ATP = [glutamine synthetase]-O(4)-(5'-adenylyl)-L-tyrosine + diphosphate. Functionally, involved in the regulation of glutamine synthetase GlnA, a key enzyme in the process to assimilate ammonia. When cellular nitrogen levels are high, the C-terminal adenylyl transferase (AT) inactivates GlnA by covalent transfer of an adenylyl group from ATP to specific tyrosine residue of GlnA, thus reducing its activity. Conversely, when nitrogen levels are low, the N-terminal adenylyl removase (AR) activates GlnA by removing the adenylyl group by phosphorolysis, increasing its activity. The regulatory region of GlnE binds the signal transduction protein PII (GlnB) which indicates the nitrogen status of the cell. This chain is Bifunctional glutamine synthetase adenylyltransferase/adenylyl-removing enzyme, found in Neisseria meningitidis serogroup B (strain ATCC BAA-335 / MC58).